A 201-amino-acid chain; its full sequence is 3-isopropylmalate dehydratase small subunit (201 aa).

It belongs to the LeuD family. LeuD type 1 subfamily. As to quaternary structure, heterodimer of LeuC and LeuD.

It catalyses the reaction (2R,3S)-3-isopropylmalate = (2S)-2-isopropylmalate. The protein operates within amino-acid biosynthesis; L-leucine biosynthesis; L-leucine from 3-methyl-2-oxobutanoate: step 2/4. In terms of biological role, catalyzes the isomerization between 2-isopropylmalate and 3-isopropylmalate, via the formation of 2-isopropylmaleate. In Methylorubrum extorquens (strain ATCC 14718 / DSM 1338 / JCM 2805 / NCIMB 9133 / AM1) (Methylobacterium extorquens), this protein is 3-isopropylmalate dehydratase small subunit.